A 171-amino-acid chain; its full sequence is Large ribosomal subunit protein bL9 (171 aa).

This sequence belongs to the bacterial ribosomal protein bL9 family.

Binds to the 23S rRNA. In Rickettsia prowazekii (strain Madrid E), this protein is Large ribosomal subunit protein bL9.